We begin with the raw amino-acid sequence, 748 residues long: ATP-dependent rRNA helicase SPB4 (748 aa).

Positions 15-43 (WAKLNPPLSPWILDVINSMGFKNMTPVQA) match the Q motif motif. Positions 46 to 260 (IPRAVKNQDC…GLGLRNPVRI (215 aa)) constitute a Helicase ATP-binding domain. 59–66 (AVTGSGKT) is an ATP binding site. Residues 119–156 (ESEEETGDVEAHAPPFASSSRSPSPQTPDKPLFPLPML) are disordered. A compositionally biased stretch (low complexity) spans 132-142 (PPFASSSRSPS). Residues 143–152 (PQTPDKPLFP) are compositionally biased toward pro residues. Positions 207 to 210 (DEAD) match the DEAD box motif. Positions 295-460 (KTLQLIRLLL…KAQRSILDFL (166 aa)) constitute a Helicase C-terminal domain. The interval 614-748 (AQRADNQSSN…IGGGMFDDLE (135 aa)) is disordered. Basic and acidic residues-rich tracts occupy residues 626 to 669 (ARAE…KYEW) and 708 to 730 (EIGK…KESS). A compositionally biased stretch (gly residues) spans 732 to 748 (GGAGGGGIGGGMFDDLE).

The protein belongs to the DEAD box helicase family. DDX55/SPB4 subfamily. Component of pre-60S ribosomal complexes.

It localises to the nucleus. The protein localises to the nucleolus. It catalyses the reaction ATP + H2O = ADP + phosphate + H(+). In terms of biological role, ATP-binding RNA helicase involved in the biogenesis of 60S ribosomal subunits. Binds 90S pre-ribosomal particles and dissociates from pre-60S ribosomal particles after processing of 27SB pre-rRNA. Required for the normal formation of 18S rRNA through the processing of pre-rRNAs at sites A0, A1 and A2, and the normal formation of 25S and 5.8S rRNAs through the processing of pre-rRNAs at sites C1 and C2. In Cryptococcus neoformans var. neoformans serotype D (strain B-3501A) (Filobasidiella neoformans), this protein is ATP-dependent rRNA helicase SPB4.